Consider the following 132-residue polypeptide: uncharacterized protein (132 aa).

The interval 1–68 (MCSAGELLRG…HTGEPVGDDY (68 aa)) is disordered. A helical transmembrane segment spans residues 100-120 (VIVIFFWVMLWFLGLQALGLV).

It belongs to the FAM241 family.

It localises to the membrane. This is an uncharacterized protein from Homo sapiens (Human).